We begin with the raw amino-acid sequence, 260 residues long: Late transcription factor 1 (260 aa).

This sequence belongs to the chordopoxvirinae VLTF-1 family. As to quaternary structure, interacts with the late transcription factors VLTF-2 and VLTF-3. Interacts with the late transcription elongation factor VLTF-4. Interacts with itself.

Functionally, associates with RNA polymerase to initiate transcription from late gene promoters. The polypeptide is Late transcription factor 1 (OPG093) (Homo sapiens (Human)).